A 411-amino-acid polypeptide reads, in one-letter code: Proteasome-activating nucleotidase 2 (411 aa).

Residues 35-75 (IVAVNGELQAQLDDVEARREELREEVNRLQRENETLKTASL) adopt a coiled-coil conformation. ATP is bound by residues 196 to 201 (GTGKTM) and histidine 335. Residues 408 to 411 (SYIQ) form a docks into pockets in the proteasome alpha-ring to cause gate opening region.

Belongs to the AAA ATPase family. In terms of assembly, homohexamer. The hexameric complex has a two-ring architecture resembling a top hat that caps the 20S proteasome core at one or both ends. Upon ATP-binding, the C-terminus of PAN interacts with the alpha-rings of the proteasome core by binding to the intersubunit pockets.

Its subcellular location is the cytoplasm. Functionally, ATPase which is responsible for recognizing, binding, unfolding and translocation of substrate proteins into the archaeal 20S proteasome core particle. Is essential for opening the gate of the 20S proteasome via an interaction with its C-terminus, thereby allowing substrate entry and access to the site of proteolysis. Thus, the C-termini of the proteasomal ATPase function like a 'key in a lock' to induce gate opening and therefore regulate proteolysis. Unfolding activity requires energy from ATP hydrolysis, whereas ATP binding alone promotes ATPase-20S proteasome association which triggers gate opening, and supports translocation of unfolded substrates. This chain is Proteasome-activating nucleotidase 2, found in Halobacterium salinarum (strain ATCC 700922 / JCM 11081 / NRC-1) (Halobacterium halobium).